The chain runs to 112 residues: Dolichyl-diphosphooligosaccharide--protein glycosyltransferase subunit DAD1 (112 aa).

The Cytoplasmic portion of the chain corresponds to methionine 1–aspartate 27. A helical transmembrane segment spans residues isoleucine 28 to glycine 48. Residues threonine 49 to proline 51 are Lumenal-facing. Residues phenylalanine 52–leucine 72 form a helical membrane-spanning segment. The Cytoplasmic segment spans residues arginine 73 to arginine 91. The helical transmembrane segment at glycine 92–glycine 112 threads the bilayer.

It belongs to the DAD/OST2 family. As to quaternary structure, component of the oligosaccharyltransferase (OST) complex.

The protein resides in the endoplasmic reticulum membrane. It functions in the pathway protein modification; protein glycosylation. Functionally, subunit of the oligosaccharyl transferase (OST) complex that catalyzes the initial transfer of a defined glycan (Glc(3)Man(9)GlcNAc(2) in eukaryotes) from the lipid carrier dolichol-pyrophosphate to an asparagine residue within an Asn-X-Ser/Thr consensus motif in nascent polypeptide chains, the first step in protein N-glycosylation. N-glycosylation occurs cotranslationally and the complex associates with the Sec61 complex at the channel-forming translocon complex that mediates protein translocation across the endoplasmic reticulum (ER). All subunits are required for a maximal enzyme activity. Probably as part of the N-glycosylation pathway, plays a role in the regulation of tissue growth and apoptosis. The sequence is that of Dolichyl-diphosphooligosaccharide--protein glycosyltransferase subunit DAD1 from Drosophila melanogaster (Fruit fly).